Consider the following 325-residue polypeptide: tRNA N6-adenosine threonylcarbamoyltransferase (325 aa).

Fe cation contacts are provided by His111 and His115. Residues 134 to 138 (LISGG), Asp167, Gly180, and Asn277 contribute to the substrate site. Residue Asp305 coordinates Fe cation.

This sequence belongs to the KAE1 / TsaD family. Requires Fe(2+) as cofactor.

The protein localises to the cytoplasm. It is found in the secreted. The enzyme catalyses L-threonylcarbamoyladenylate + adenosine(37) in tRNA = N(6)-L-threonylcarbamoyladenosine(37) in tRNA + AMP + H(+). Functionally, required for the formation of a threonylcarbamoyl group on adenosine at position 37 (t(6)A37) in tRNAs that read codons beginning with adenine. Is involved in the transfer of the threonylcarbamoyl moiety of threonylcarbamoyl-AMP (TC-AMP) to the N6 group of A37, together with TsaE and TsaB. TsaD likely plays a direct catalytic role in this reaction. The chain is tRNA N6-adenosine threonylcarbamoyltransferase from Mannheimia haemolytica (Pasteurella haemolytica).